A 603-amino-acid chain; its full sequence is Linalool synthase Tps-5031L19, chloroplastic (603 aa).

Residues 1 to 36 (MSSMRTYVAIMKKPSVEHVDNVDKKASKPSWRVSLS) constitute a chloroplast transit peptide. Positions 322, 359, 363, 500, and 503 each coordinate (2E)-geranyl diphosphate. Positions 359 and 363 each coordinate Mg(2+). Residues 359–363 (DDVYD) carry the DDXXD motif motif. Residues D503, T507, and E511 each contribute to the Mg(2+) site.

It belongs to the terpene synthase family. Tpsb subfamily. Monomer. It depends on Mg(2+) as a cofactor. Requires Mn(2+) as cofactor.

Its subcellular location is the plastid. It localises to the chloroplast. The enzyme catalyses (2E)-geranyl diphosphate + H2O = linalool + diphosphate. The protein operates within secondary metabolite biosynthesis; terpenoid biosynthesis. In terms of biological role, monoterpene synthase (mono-TPS) involved in the biosynthesis of monoterpenes natural products. Catalyzes the conversion of (2E)-geranyl diphosphate (GPP) into linalool. This is Linalool synthase Tps-5031L19, chloroplastic from Perilla frutescens var. hirtella (Perilla citriodora).